Consider the following 103-residue polypeptide: Large ribosomal subunit protein bL28 (103 aa).

It belongs to the bacterial ribosomal protein bL28 family.

In Anaplasma phagocytophilum (strain HZ), this protein is Large ribosomal subunit protein bL28.